Consider the following 174-residue polypeptide: Protein-lysine myristoyltransferase HlyC (174 aa).

Active-site residues include H23 and D92. Position 151 (H151) interacts with heme.

Belongs to the RTX toxin acyltransferase family. Monomer. Post-translationally, proteolytically cleaved by the protease systems ClpAP, ClpXP and FtsH, leading to its degradation.

Its subcellular location is the cytoplasm. It catalyses the reaction tetradecanoyl-[ACP] + L-lysyl-[protein] = N(6)-tetradecanoyl-L-lysyl-[protein] + holo-[ACP] + H(+). Its activity is regulated as follows. The acyltransferase activity is inhibited by heme. Its function is as follows. Protein-lysine myristoyltransferase that catalyzes myristoylation of the protoxin (HlyA) at two internal lysine residues, thereby converting it to the active toxin. The chain is Protein-lysine myristoyltransferase HlyC from Escherichia coli.